An 872-amino-acid polypeptide reads, in one-letter code: Alanine--tRNA ligase (872 aa).

Histidine 567, histidine 571, cysteine 669, and histidine 673 together coordinate Zn(2+).

This sequence belongs to the class-II aminoacyl-tRNA synthetase family. The cofactor is Zn(2+).

The protein resides in the cytoplasm. The catalysed reaction is tRNA(Ala) + L-alanine + ATP = L-alanyl-tRNA(Ala) + AMP + diphosphate. Functionally, catalyzes the attachment of alanine to tRNA(Ala) in a two-step reaction: alanine is first activated by ATP to form Ala-AMP and then transferred to the acceptor end of tRNA(Ala). Also edits incorrectly charged Ser-tRNA(Ala) and Gly-tRNA(Ala) via its editing domain. This chain is Alanine--tRNA ligase, found in Streptococcus pyogenes serotype M12 (strain MGAS2096).